We begin with the raw amino-acid sequence, 264 residues long: H-2 class II histocompatibility antigen, I-A beta chain (264 aa).

An N-terminal signal peptide occupies residues 1–31; the sequence is MVWLPRVPCVAAVILLLTVLSPPVALVRDSR. Positions 32-121 are beta-1; sequence PWFLEYCKSE…IFDNFLVPRR (90 aa). The Extracellular portion of the chain corresponds to 32-225; that stretch reads PWFLEYCKSE…KAQSTSAQNK (194 aa). 2 cysteine pairs are disulfide-bonded: cysteine 42-cysteine 106 and cysteine 144-cysteine 200. The N-linked (GlcNAc...) asparagine glycan is linked to asparagine 46. Residues 122–215 form a beta-2 region; sequence VEPTVTVYPT…SLTDPVTVEW (94 aa). Residues 124-214 enclose the Ig-like C1-type domain; it reads PTVTVYPTKT…PSLTDPVTVE (91 aa). The interval 216-225 is connecting peptide; sequence KAQSTSAQNK. The chain crosses the membrane as a helical span at residues 226–248; sequence MLSGVGGFVLGLLFLRAGLFIYF. The Cytoplasmic segment spans residues 249-264; sequence RNQKGQSGLQPTGLLS.

This sequence belongs to the MHC class II family. Ubiquitinated in immature dendritic cells leading to down-regulation of MHC class II.

It is found in the membrane. The sequence is that of H-2 class II histocompatibility antigen, I-A beta chain (H2-Eb1) from Mus musculus (Mouse).